The sequence spans 1407 residues: DNA-directed RNA polymerase subunit beta' (1407 aa).

Cysteine 70, cysteine 72, cysteine 85, and cysteine 88 together coordinate Zn(2+). Mg(2+)-binding residues include aspartate 458, aspartate 460, and aspartate 462. Residues cysteine 814, cysteine 888, cysteine 895, and cysteine 898 each contribute to the Zn(2+) site.

This sequence belongs to the RNA polymerase beta' chain family. As to quaternary structure, the RNAP catalytic core consists of 2 alpha, 1 beta, 1 beta' and 1 omega subunit. When a sigma factor is associated with the core the holoenzyme is formed, which can initiate transcription. Mg(2+) serves as cofactor. Requires Zn(2+) as cofactor.

It catalyses the reaction RNA(n) + a ribonucleoside 5'-triphosphate = RNA(n+1) + diphosphate. Its function is as follows. DNA-dependent RNA polymerase catalyzes the transcription of DNA into RNA using the four ribonucleoside triphosphates as substrates. The chain is DNA-directed RNA polymerase subunit beta' from Leptothrix cholodnii (strain ATCC 51168 / LMG 8142 / SP-6) (Leptothrix discophora (strain SP-6)).